A 451-amino-acid chain; its full sequence is Tubulin beta-4 chain (451 aa).

The GTP site is built by Gln11, Glu69, Ser138, Gly142, Thr143, Gly144, Asn204, and Asn226. A Mg(2+)-binding site is contributed by Glu69. Polar residues predominate over residues 417–427 (DLVSEYQQYQD). A disordered region spans residues 417–451 (DLVSEYQQYQDATAEEEGEYDEDDGGYGDEDDGMM). Residues 429 to 451 (TAEEEGEYDEDDGGYGDEDDGMM) are compositionally biased toward acidic residues.

It belongs to the tubulin family. In terms of assembly, dimer of alpha and beta chains. A typical microtubule is a hollow water-filled tube with an outer diameter of 25 nm and an inner diameter of 15 nM. Alpha-beta heterodimers associate head-to-tail to form protofilaments running lengthwise along the microtubule wall with the beta-tubulin subunit facing the microtubule plus end conferring a structural polarity. Microtubules usually have 13 protofilaments but different protofilament numbers can be found in some organisms and specialized cells. Mg(2+) serves as cofactor.

Its subcellular location is the cytoplasm. It localises to the cytoskeleton. Tubulin is the major constituent of microtubules, a cylinder consisting of laterally associated linear protofilaments composed of alpha- and beta-tubulin heterodimers. Microtubules grow by the addition of GTP-tubulin dimers to the microtubule end, where a stabilizing cap forms. Below the cap, tubulin dimers are in GDP-bound state, owing to GTPase activity of alpha-tubulin. In Oomycete-like sp. (strain MacKay2000), this protein is Tubulin beta-4 chain (TUBB4).